The primary structure comprises 306 residues: Probable cobalamin biosynthesis protein CobD (306 aa).

5 helical membrane-spanning segments follow: residues Leu54–Ile74, Ile88–Ser108, Ile155–Phe175, Ile207–Tyr227, and Ser286–Met306.

Belongs to the CobD/CbiB family.

The protein resides in the cell membrane. It functions in the pathway cofactor biosynthesis; adenosylcobalamin biosynthesis. Its function is as follows. Converts cobyric acid to cobinamide by the addition of aminopropanol on the F carboxylic group. The polypeptide is Probable cobalamin biosynthesis protein CobD (Methanococcus maripaludis (strain DSM 14266 / JCM 13030 / NBRC 101832 / S2 / LL)).